Reading from the N-terminus, the 243-residue chain is 1-(5-phosphoribosyl)-5-[(5-phosphoribosylamino)methylideneamino] imidazole-4-carboxamide isomerase (243 aa).

Aspartate 10 functions as the Proton acceptor in the catalytic mechanism. The active-site Proton donor is the aspartate 128.

Belongs to the HisA/HisF family.

Its subcellular location is the cytoplasm. It catalyses the reaction 1-(5-phospho-beta-D-ribosyl)-5-[(5-phospho-beta-D-ribosylamino)methylideneamino]imidazole-4-carboxamide = 5-[(5-phospho-1-deoxy-D-ribulos-1-ylimino)methylamino]-1-(5-phospho-beta-D-ribosyl)imidazole-4-carboxamide. The protein operates within amino-acid biosynthesis; L-histidine biosynthesis; L-histidine from 5-phospho-alpha-D-ribose 1-diphosphate: step 4/9. The protein is 1-(5-phosphoribosyl)-5-[(5-phosphoribosylamino)methylideneamino] imidazole-4-carboxamide isomerase of Helicobacter hepaticus (strain ATCC 51449 / 3B1).